The chain runs to 468 residues: Methylenetetrahydrofolate--tRNA-(uracil-5-)-methyltransferase TrmFO (468 aa).

10–15 (GGGLAG) is a binding site for FAD.

It belongs to the MnmG family. TrmFO subfamily. FAD is required as a cofactor.

It localises to the cytoplasm. The enzyme catalyses uridine(54) in tRNA + (6R)-5,10-methylene-5,6,7,8-tetrahydrofolate + NADH + H(+) = 5-methyluridine(54) in tRNA + (6S)-5,6,7,8-tetrahydrofolate + NAD(+). It carries out the reaction uridine(54) in tRNA + (6R)-5,10-methylene-5,6,7,8-tetrahydrofolate + NADPH + H(+) = 5-methyluridine(54) in tRNA + (6S)-5,6,7,8-tetrahydrofolate + NADP(+). Its function is as follows. Catalyzes the folate-dependent formation of 5-methyl-uridine at position 54 (M-5-U54) in all tRNAs. The polypeptide is Methylenetetrahydrofolate--tRNA-(uracil-5-)-methyltransferase TrmFO (Chelativorans sp. (strain BNC1)).